Consider the following 179-residue polypeptide: Ubiquitin-conjugating enzyme E2 C (179 aa).

A compositionally biased stretch (polar residues) spans 1-14; it reads MASQNRDPAATSVT. The interval 1-31 is disordered; the sequence is MASQNRDPAATSVTAARKGAEPSGGAARGPV. A2 carries the N-acetylalanine modification. Phosphoserine is present on S3. Residues 30-175 enclose the UBC core domain; that stretch reads PVGKRLQQEL…LQETYSKQVT (146 aa). C114 functions as the Glycyl thioester intermediate in the catalytic mechanism.

The protein belongs to the ubiquitin-conjugating enzyme family. In terms of assembly, component of the APC/C complex, composed of at least 14 distinct subunits that assemble into a complex of at least 19 chains with a combined molecular mass of around 1.2 MDa. Within this complex, directly interacts with ANAPC2. In terms of processing, autoubiquitinated by the APC/C complex, leading to its degradation by the proteasome. Its degradation plays a central role in APC/C regulation, allowing cyclin-A accumulation before S phase entry. APC/C substrates inhibit the autoubiquitination of UBE2C/UBCH10 but not its E2 function, hence APC/C remaining active until its substrates have been destroyed.

It catalyses the reaction S-ubiquitinyl-[E1 ubiquitin-activating enzyme]-L-cysteine + [E2 ubiquitin-conjugating enzyme]-L-cysteine = [E1 ubiquitin-activating enzyme]-L-cysteine + S-ubiquitinyl-[E2 ubiquitin-conjugating enzyme]-L-cysteine.. The enzyme catalyses S-ubiquitinyl-[E1 ubiquitin-activating enzyme]-L-cysteine + [acceptor protein]-L-lysine = [E1 ubiquitin-activating enzyme]-L-cysteine + N(6)-monoubiquitinyl-[acceptor protein]-L-lysine.. It participates in protein modification; protein ubiquitination. In terms of biological role, accepts ubiquitin from the E1 complex and catalyzes its covalent attachment to other proteins. In vitro catalyzes 'Lys-11'- and 'Lys-48'-linked polyubiquitination. Acts as an essential factor of the anaphase promoting complex/cyclosome (APC/C), a cell cycle-regulated ubiquitin ligase that controls progression through mitosis. Acts by initiating 'Lys-11'-linked polyubiquitin chains on APC/C substrates, leading to the degradation of APC/C substrates by the proteasome and promoting mitotic exit. In Macaca fascicularis (Crab-eating macaque), this protein is Ubiquitin-conjugating enzyme E2 C (UBE2C).